The chain runs to 460 residues: Chromosomal replication initiator protein DnaA (460 aa).

The interval 1 to 78 is domain I, interacts with DnaA modulators; sequence MENFWQACSA…VPVEVQFVLD (78 aa). The domain II stretch occupies residues 78–123; it reads DPRLVAARRPAAQASVVSDRADDVPSNVLEPIPSNATDHTPRRDQS. Positions 124–340 are domain III, AAA+ region; it reads RINTALTFDS…GALRKILAYS (217 aa). The ATP site is built by Gly168, Gly170, Lys171, and Thr172. A domain IV, binds dsDNA region spans residues 341 to 460; it reads RFHGKDITIE…LHVLEQTLKG (120 aa).

This sequence belongs to the DnaA family. As to quaternary structure, oligomerizes as a right-handed, spiral filament on DNA at oriC.

The protein resides in the cytoplasm. In terms of biological role, plays an essential role in the initiation and regulation of chromosomal replication. ATP-DnaA binds to the origin of replication (oriC) to initiate formation of the DNA replication initiation complex once per cell cycle. Binds the DnaA box (a 9 base pair repeat at the origin) and separates the double-stranded (ds)DNA. Forms a right-handed helical filament on oriC DNA; dsDNA binds to the exterior of the filament while single-stranded (ss)DNA is stabiized in the filament's interior. The ATP-DnaA-oriC complex binds and stabilizes one strand of the AT-rich DNA unwinding element (DUE), permitting loading of DNA polymerase. After initiation quickly degrades to an ADP-DnaA complex that is not apt for DNA replication. Binds acidic phospholipids. This chain is Chromosomal replication initiator protein DnaA, found in Herminiimonas arsenicoxydans.